The following is a 328-amino-acid chain: Methionyl-tRNA formyltransferase (328 aa).

Ser110–Pro113 serves as a coordination point for (6S)-5,6,7,8-tetrahydrofolate.

It belongs to the Fmt family.

It catalyses the reaction L-methionyl-tRNA(fMet) + (6R)-10-formyltetrahydrofolate = N-formyl-L-methionyl-tRNA(fMet) + (6S)-5,6,7,8-tetrahydrofolate + H(+). In terms of biological role, attaches a formyl group to the free amino group of methionyl-tRNA(fMet). The formyl group appears to play a dual role in the initiator identity of N-formylmethionyl-tRNA by promoting its recognition by IF2 and preventing the misappropriation of this tRNA by the elongation apparatus. This is Methionyl-tRNA formyltransferase from Prochlorococcus marinus (strain MIT 9215).